The sequence spans 280 residues: DegV domain-containing protein SPy_1698/M5005_Spy1391 (280 aa).

A DegV domain is found at 3–280 (WKIVTDSGCD…DGGLLMGYEI (278 aa)). Residues Ser-63 and Ser-91 each contribute to the hexadecanoate site.

In terms of biological role, may bind long-chain fatty acids, such as palmitate, and may play a role in lipid transport or fatty acid metabolism. This chain is DegV domain-containing protein SPy_1698/M5005_Spy1391, found in Streptococcus pyogenes serotype M1.